Reading from the N-terminus, the 465-residue chain is Fumarate hydratase class II (465 aa).

Residues 99 to 101 (SGT), 130 to 133 (HPND), 140 to 142 (STN), and threonine 188 each bind substrate. Histidine 189 functions as the Proton donor/acceptor in the catalytic mechanism. Serine 319 is a catalytic residue. Substrate contacts are provided by residues serine 320 and 325–327 (KVN).

The protein belongs to the class-II fumarase/aspartase family. Fumarase subfamily. As to quaternary structure, homotetramer.

The protein resides in the cytoplasm. It carries out the reaction (S)-malate = fumarate + H2O. The protein operates within carbohydrate metabolism; tricarboxylic acid cycle; (S)-malate from fumarate: step 1/1. Its function is as follows. Involved in the TCA cycle. Catalyzes the stereospecific interconversion of fumarate to L-malate. This chain is Fumarate hydratase class II, found in Prochlorococcus marinus (strain SARG / CCMP1375 / SS120).